The sequence spans 239 residues: Phosphoribosylaminoimidazole-succinocarboxamide synthase (239 aa).

This sequence belongs to the SAICAR synthetase family.

The catalysed reaction is 5-amino-1-(5-phospho-D-ribosyl)imidazole-4-carboxylate + L-aspartate + ATP = (2S)-2-[5-amino-1-(5-phospho-beta-D-ribosyl)imidazole-4-carboxamido]succinate + ADP + phosphate + 2 H(+). Its pathway is purine metabolism; IMP biosynthesis via de novo pathway; 5-amino-1-(5-phospho-D-ribosyl)imidazole-4-carboxamide from 5-amino-1-(5-phospho-D-ribosyl)imidazole-4-carboxylate: step 1/2. This Bacillus cereus (strain 03BB102) protein is Phosphoribosylaminoimidazole-succinocarboxamide synthase.